We begin with the raw amino-acid sequence, 346 residues long: Acetyl-coenzyme A carboxylase carboxyl transferase subunit beta (346 aa).

One can recognise a CoA carboxyltransferase N-terminal domain in the interval 24 to 292; sequence LWIKCPKSGD…LPEVEPIAVA (269 aa). The span at 300-311 shows a compositional bias: acidic residues; sequence AEAEAAPDEVVE. The disordered stretch occupies residues 300-346; it reads AEAEAAPDEVVEVEAPAVDEIVEEKPAATKAKPRSKAKSKAAPKTDE. Basic residues predominate over residues 330-340; the sequence is AKPRSKAKSKA.

It belongs to the AccD/PCCB family. As to quaternary structure, acetyl-CoA carboxylase is a heterohexamer composed of biotin carboxyl carrier protein (AccB), biotin carboxylase (AccC) and two subunits each of ACCase subunit alpha (AccA) and ACCase subunit beta (AccD).

It is found in the cytoplasm. It carries out the reaction N(6)-carboxybiotinyl-L-lysyl-[protein] + acetyl-CoA = N(6)-biotinyl-L-lysyl-[protein] + malonyl-CoA. It functions in the pathway lipid metabolism; malonyl-CoA biosynthesis; malonyl-CoA from acetyl-CoA: step 1/1. Its function is as follows. Component of the acetyl coenzyme A carboxylase (ACC) complex. Biotin carboxylase (BC) catalyzes the carboxylation of biotin on its carrier protein (BCCP) and then the CO(2) group is transferred by the transcarboxylase to acetyl-CoA to form malonyl-CoA. This is Acetyl-coenzyme A carboxylase carboxyl transferase subunit beta from Hirschia baltica (strain ATCC 49814 / DSM 5838 / IFAM 1418).